Reading from the N-terminus, the 529-residue chain is Bifunctional purine biosynthesis protein PurH (529 aa).

The MGS-like domain maps to 1-148; sequence MQQRRPVRRA…KNHKDVAIVV (148 aa). K287 is modified (N6-acetyllysine).

It belongs to the PurH family.

It catalyses the reaction (6R)-10-formyltetrahydrofolate + 5-amino-1-(5-phospho-beta-D-ribosyl)imidazole-4-carboxamide = 5-formamido-1-(5-phospho-D-ribosyl)imidazole-4-carboxamide + (6S)-5,6,7,8-tetrahydrofolate. It carries out the reaction IMP + H2O = 5-formamido-1-(5-phospho-D-ribosyl)imidazole-4-carboxamide. The protein operates within purine metabolism; IMP biosynthesis via de novo pathway; 5-formamido-1-(5-phospho-D-ribosyl)imidazole-4-carboxamide from 5-amino-1-(5-phospho-D-ribosyl)imidazole-4-carboxamide (10-formyl THF route): step 1/1. It functions in the pathway purine metabolism; IMP biosynthesis via de novo pathway; IMP from 5-formamido-1-(5-phospho-D-ribosyl)imidazole-4-carboxamide: step 1/1. This chain is Bifunctional purine biosynthesis protein PurH, found in Escherichia coli O6:H1 (strain CFT073 / ATCC 700928 / UPEC).